The following is a 574-amino-acid chain: WAP, Kazal, immunoglobulin, Kunitz and NTR domain-containing protein 2 (574 aa).

The N-terminal stretch at 1-32 (MWALRGCRSGSRWGQGAALLLLLLGVPPRGLA) is a signal peptide. Residues 37 to 90 (RYSHAGICPNDMNPNLWVDAQSTCKRECETDQECETYEKCCPNVCGTKSCVAAR) enclose the WAP domain. Disulfide bonds link Cys-44–Cys-77, Cys-60–Cys-81, Cys-64–Cys-76, Cys-70–Cys-86, Cys-132–Cys-162, Cys-136–Cys-155, Cys-144–Cys-173, Cys-229–Cys-285, Cys-326–Cys-376, Cys-335–Cys-359, Cys-351–Cys-372, Cys-384–Cys-434, Cys-393–Cys-417, Cys-409–Cys-430, Cys-443–Cys-513, Cys-446–Cys-515, and Cys-457–Cys-564. Residues 124–175 (WDGQPVCKCRDRCEKEPSFTCASDGLTYYNRCYMDAEACSKGITLAVVTCRY) enclose the Kazal-like domain. Residues 208-301 (PALLNHPAHQ…GVLRADFPLS (94 aa)) form the Ig-like C2-type domain. 2 consecutive BPTI/Kunitz inhibitor domains span residues 326-376 (CLKP…MLAC) and 384-434 (CSLP…EESC). The 122-residue stretch at 443-564 (CRACKPRQKL…LREVMHKKTC (122 aa)) folds into the NTR domain. N-linked (GlcNAc...) asparagine glycosylation is present at Asn-517.

This sequence belongs to the WFIKKN family. As to quaternary structure, interacts with both mature and propeptide myostatin/MSTN.

The protein resides in the secreted. Functionally, protease-inhibitor that contains multiple distinct protease inhibitor domains. Probably has serine protease- and metalloprotease-inhibitor activity. Inhibits the biological activity of mature myostatin, but not activin. The protein is WAP, Kazal, immunoglobulin, Kunitz and NTR domain-containing protein 2 (WFIKKN2) of Bos taurus (Bovine).